A 597-amino-acid chain; its full sequence is Protein IQ-DOMAIN 29 (597 aa).

Residues 1–31 (MGKTPSPGKWIKSLLGKKSSKSSLEKGGEKL) are disordered. 3 IQ domains span residues 106–134 (LEEA…GITR), 135–153 (VQAV…ATYS), and 157–183 (GIVK…QKTN). The tract at residues 159–173 (VKVQALVRGKKARSS) is calmodulin-binding. The Nuclear localization signal 1 motif lies at 264–271 (KKRSFQAV). Disordered regions lie at residues 268–379 (FQAV…KKEI) and 407–597 (LIPV…EWKR). A compositionally biased stretch (low complexity) spans 289–300 (STTANSSTSRST). The span at 319 to 329 (ELSKIENDKSK) shows a compositional bias: basic and acidic residues. Positions 356–363 (HKKASLSN) match the Nuclear localization signal 2 motif. Residues 414–463 (KESDLDKDEKSLVLDKPEQDELRTAERDDKAEEELKTAERDDSAEEKIQE) show a composition bias toward basic and acidic residues. Positions 467-480 (QISSENGNVASENT) are enriched in polar residues. A compositionally biased stretch (basic and acidic residues) spans 481–500 (KPSDRRASLPAKIENHHQDD). Over residues 572 to 584 (GSMNSDRSFSSSK) the composition is skewed to polar residues. Positions 585-597 (DIGDKSTKAEWKR) are enriched in basic and acidic residues.

It belongs to the IQD family. As to quaternary structure, binds to multiple calmodulin (CaM) in the presence of Ca(2+) and CaM-like proteins.

The protein localises to the nucleus. It is found in the nucleus envelope. The protein resides in the cytoplasm. It localises to the cytoskeleton. Its subcellular location is the cell membrane. In terms of biological role, may be involved in cooperative interactions with calmodulins or calmodulin-like proteins. Recruits calmodulin proteins to microtubules, thus being a potential scaffold in cellular signaling and trafficking. May associate with nucleic acids and regulate gene expression at the transcriptional or post-transcriptional level. In Arabidopsis thaliana (Mouse-ear cress), this protein is Protein IQ-DOMAIN 29.